The chain runs to 574 residues: Type II methyltransferase M.PaeR7I (574 aa).

It belongs to the N(4)/N(6)-methyltransferase family. As to quaternary structure, monomer.

The enzyme catalyses a 2'-deoxyadenosine in DNA + S-adenosyl-L-methionine = an N(6)-methyl-2'-deoxyadenosine in DNA + S-adenosyl-L-homocysteine + H(+). Its function is as follows. A gamma subtype methylase, recognizes the double-stranded sequence 5'-CTCGAG-3', methylates A-5 on both strands, and protects the DNA from cleavage by the PaeR7I endonuclease. This Pseudomonas aeruginosa protein is Type II methyltransferase M.PaeR7I (paeR7IM).